A 664-amino-acid chain; its full sequence is Translation factor GUF1, mitochondrial (664 aa).

A tr-type G domain is found at 63–246; the sequence is SNYRNFSIVA…SIINNIPPPQ (184 aa). Residues 72-79, 139-143, and 193-196 contribute to the GTP site; these read AHVDHGKS, DTPGH, and NKID.

The protein belongs to the TRAFAC class translation factor GTPase superfamily. Classic translation factor GTPase family. LepA subfamily.

Its subcellular location is the mitochondrion inner membrane. The catalysed reaction is GTP + H2O = GDP + phosphate + H(+). Functionally, promotes mitochondrial protein synthesis. May act as a fidelity factor of the translation reaction, by catalyzing a one-codon backward translocation of tRNAs on improperly translocated ribosomes. Binds to mitochondrial ribosomes in a GTP-dependent manner. This chain is Translation factor GUF1, mitochondrial, found in Clavispora lusitaniae (strain ATCC 42720) (Yeast).